The primary structure comprises 153 residues: Methylglyoxal synthase (153 aa).

The region spanning 3-153 is the MGS-like domain; sequence DQVNRPKGVT…SYLSRDVPGN (151 aa). Substrate-binding positions include His19, Lys23, 45–48, and 65–66; these read TGTT and SG. Residue Asp71 is the Proton donor/acceptor of the active site. Residue His98 coordinates substrate.

It belongs to the methylglyoxal synthase family.

It catalyses the reaction dihydroxyacetone phosphate = methylglyoxal + phosphate. Its function is as follows. Catalyzes the formation of methylglyoxal from dihydroxyacetone phosphate. The protein is Methylglyoxal synthase of Hahella chejuensis (strain KCTC 2396).